Consider the following 290-residue polypeptide: Phosphate import ATP-binding protein PstB (290 aa).

One can recognise an ABC transporter domain in the interval 43–285 (MSVRNLNVYY…PEHELTEAYI (243 aa)). Residue 75–82 (GPSGCGKS) participates in ATP binding.

Belongs to the ABC transporter superfamily. Phosphate importer (TC 3.A.1.7) family. As to quaternary structure, the complex is composed of two ATP-binding proteins (PstB), two transmembrane proteins (PstC and PstA) and a solute-binding protein (PstS).

Its subcellular location is the cell inner membrane. It catalyses the reaction phosphate(out) + ATP + H2O = ADP + 2 phosphate(in) + H(+). Functionally, part of the ABC transporter complex PstSACB involved in phosphate import. Responsible for energy coupling to the transport system. The protein is Phosphate import ATP-binding protein PstB of Pseudoalteromonas atlantica (strain T6c / ATCC BAA-1087).